A 295-amino-acid polypeptide reads, in one-letter code: tRNA-cytidine(32) 2-sulfurtransferase (295 aa).

A PP-loop motif motif is present at residues 63–68 (SGGKDS). [4Fe-4S] cluster-binding residues include Cys138, Cys141, and Cys229.

It belongs to the TtcA family. In terms of assembly, homodimer. It depends on Mg(2+) as a cofactor. Requires [4Fe-4S] cluster as cofactor.

The protein localises to the cytoplasm. It catalyses the reaction cytidine(32) in tRNA + S-sulfanyl-L-cysteinyl-[cysteine desulfurase] + AH2 + ATP = 2-thiocytidine(32) in tRNA + L-cysteinyl-[cysteine desulfurase] + A + AMP + diphosphate + H(+). It functions in the pathway tRNA modification. Catalyzes the ATP-dependent 2-thiolation of cytidine in position 32 of tRNA, to form 2-thiocytidine (s(2)C32). The sulfur atoms are provided by the cysteine/cysteine desulfurase (IscS) system. The protein is tRNA-cytidine(32) 2-sulfurtransferase of Mesorhizobium japonicum (strain LMG 29417 / CECT 9101 / MAFF 303099) (Mesorhizobium loti (strain MAFF 303099)).